The sequence spans 134 residues: Transmembrane protein 100 (134 aa).

The segment at 1-24 is disordered; that stretch reads MTEEPTKENLGGPKSPTPVTMEKS. S15 carries the phosphoserine modification. The next 2 membrane-spanning stretches (helical) occupy residues 56-76 and 84-104; these read CIIP…AVAY and VISI…ASSA. Residue S121 is modified to Phosphoserine.

In terms of assembly, interacts (via C-terminus) with TRPA1 and TRPV1. Interacts with TASOR.

The protein localises to the cell membrane. The protein resides in the membrane. Its subcellular location is the perikaryon. It is found in the cytoplasm. It localises to the perinuclear region. The protein localises to the endoplasmic reticulum. Its function is as follows. Plays a role during embryonic arterial endothelium differentiation and vascular morphogenesis through the ACVRL1 receptor-dependent signaling pathway upon stimulation by bone morphogenetic proteins, such as GDF2/BMP9 and BMP10. Involved in the regulation of nociception, acting as a modulator of the interaction between TRPA1 and TRPV1, two molecular sensors and mediators of pain signals in dorsal root ganglia (DRG) neurons. Mechanistically, it weakens their interaction, thereby releasing the inhibition of TRPA1 by TRPV1 and increasing the single-channel open probability of the TRPA1-TRPV1 complex. The polypeptide is Transmembrane protein 100 (Tmem100) (Rattus norvegicus (Rat)).